The sequence spans 196 residues: UPF0215 protein MM_1007 (196 aa).

The protein belongs to the UPF0215 family.

This is UPF0215 protein MM_1007 from Methanosarcina mazei (strain ATCC BAA-159 / DSM 3647 / Goe1 / Go1 / JCM 11833 / OCM 88) (Methanosarcina frisia).